Reading from the N-terminus, the 217-residue chain is Magnetosome protein MamA (217 aa).

6 TPR repeats span residues 12–44 (VTLY…NDDI), 46–79 (QVYY…DAFD), 80–113 (VEVA…APDN), 114–147 (IKVA…NPVN), 148–181 (FNVR…RPNE), and 182–215 (GKVH…DERS). An N-terminal domain region spans residues 41 to 112 (NDDIRQVYYR…LERSIADAPD (72 aa)). Positions 113 to 217 (NIKVATVLGL…ANELDERSAV (105 aa)) are C-terminal domain.

Belongs to the magnetosome MamA family. Forms round, 20 nm diameter complexes with a central cavity. Probably binds MamC. Interacts with full-length Mms6.

The protein localises to the magnetosome membrane. Probably forms a large homooligomer on which other magnetosome subunits assemble. Required for formation of functional magnetosomes from pre-existing vesicles. This Magnetospirillum gryphiswaldense (strain DSM 6361 / JCM 21280 / NBRC 15271 / MSR-1) protein is Magnetosome protein MamA.